Reading from the N-terminus, the 126-residue chain is Holo-[acyl-carrier-protein] synthase (126 aa).

Mg(2+) contacts are provided by Asp9 and Glu58.

Belongs to the P-Pant transferase superfamily. AcpS family. Mg(2+) is required as a cofactor.

The protein resides in the cytoplasm. The enzyme catalyses apo-[ACP] + CoA = holo-[ACP] + adenosine 3',5'-bisphosphate + H(+). Functionally, transfers the 4'-phosphopantetheine moiety from coenzyme A to a Ser of acyl-carrier-protein. In Buchnera aphidicola subsp. Acyrthosiphon pisum (strain APS) (Acyrthosiphon pisum symbiotic bacterium), this protein is Holo-[acyl-carrier-protein] synthase.